We begin with the raw amino-acid sequence, 363 residues long: 2,5-diketocamphane 1,2-monooxygenase 1 (363 aa).

FMN is bound by residues Met-74 and 186–194 (TGLTKNSSS).

Belongs to the bacterial luciferase oxidoreductase family. Homodimer. Likely forms a loose transient complex with a P.putida flavin reductase that provides the required FMNH(2) to the enzyme.

The catalysed reaction is (1R,4R)-bornane-2,5-dione + FMNH2 + O2 = (1R,4R)-5-oxo-1,2-campholide + FMN + H2O + H(+). It functions in the pathway terpene metabolism; (R)-camphor degradation. Involved in the degradation and assimilation of (+)-camphor, which allows P.putida strain NCIMB 10007 to grow on this enantiomer of camphor as the sole carbon source. Catalyzes the FMNH(2)-dependent lactonization of 2,5-diketocamphane via a Baeyer-Villiger oxidation to produce the unstable lactone 5-oxo-1,2-campholide with (R,R) configuration, that presumably undergoes spontaneous hydrolysis to form 2-oxo-Delta(3)-4,5,5-trimethylcyclopentenylacetate. Is also able to convert (+)-camphor and norcamphor to the corresponding lactone in vitro. Shows no conversion of (-)-camphor, (+)-fenchone, (-)-fenchone, and (+)-nopinone. Acts only on bicyclic ketones; is not active towards monocyclic ketones, aromatic ketones, the aliphatic 2-decanone, 1-indanone and progesterone. This chain is 2,5-diketocamphane 1,2-monooxygenase 1, found in Pseudomonas putida (Arthrobacter siderocapsulatus).